Reading from the N-terminus, the 336-residue chain is Dihydroorotate dehydrogenase (quinone) (336 aa).

FMN is bound by residues 62 to 66 (AGLDK) and T86. K66 is a substrate binding site. 111 to 115 (NRFGF) lines the substrate pocket. FMN is bound by residues N139 and N172. A substrate-binding site is contributed by N172. The active-site Nucleophile is S175. N177 provides a ligand contact to substrate. FMN is bound by residues K217 and T245. 246–247 (NT) is a binding site for substrate. FMN is bound by residues G268, G297, and 318–319 (YS).

It belongs to the dihydroorotate dehydrogenase family. Type 2 subfamily. In terms of assembly, monomer. It depends on FMN as a cofactor.

The protein localises to the cell membrane. The enzyme catalyses (S)-dihydroorotate + a quinone = orotate + a quinol. Its pathway is pyrimidine metabolism; UMP biosynthesis via de novo pathway; orotate from (S)-dihydroorotate (quinone route): step 1/1. Catalyzes the conversion of dihydroorotate to orotate with quinone as electron acceptor. The chain is Dihydroorotate dehydrogenase (quinone) from Photobacterium profundum (strain SS9).